Consider the following 308-residue polypeptide: uncharacterized protein (308 aa).

In terms of domain architecture, ABC transporter spans 6 to 234 (LHIEGLDKKI…TEKAIIEVQP (229 aa)). 38–45 (GPNGSGKT) contributes to the ATP binding site.

This sequence belongs to the ABC transporter superfamily.

This is an uncharacterized protein from Bacillus subtilis (strain 168).